The following is a 238-amino-acid chain: RAD9, HUS1, RAD1-interacting nuclear orphan protein 1 (238 aa).

The span at 1–10 shows a compositional bias: basic residues; that stretch reads MPPRKKRRQP. The disordered stretch occupies residues 1–31; that stretch reads MPPRKKRRQPSQKAPLLFHQQPLEGPKHSCA. Phosphoserine; by PLK1 is present on Ser-51. The short motif at 55 to 61 is the RAD1-binding motif element; sequence SWVSPDF. Residues 74–105 are disordered; sequence KHQNRARHSSRKPTTSKFPHLTFESPQSSSSE. Positions 75-84 are enriched in basic residues; it reads HQNRARHSSR. Residues 125–132 carry the D-box motif; that stretch reads RRPLVPVL. The KEN box motif lies at 174–178; that stretch reads QKENS.

Interacts (when phosphorylated by PLK1) with POLQ; promoting POLQ recruitment to DNA damage sites. Interacts with RAD1; interaction is direct and promotes association with the 9-1-1 (RAD9-RAD1-HUS1) complex. Interacts with RAD18. Interacts with TOPBP1. Interacts with UBE2N. Post-translationally, phosphorylated at Ser-51 by PLK1, promoting interaction with polymerase theta (POLQ). In terms of processing, ubiquitinated and degraded by the APC/C complex upon mitotic exit. In terms of tissue distribution, weakly expressed in testis, prostate, ovary, thymus and small intestine. Expressed strongly in breast cancer cells.

The protein resides in the nucleus. It localises to the chromosome. In terms of biological role, involved in microhomology-mediated end-joining (MMEJ) DNA repair by promoting recruitment of polymerase theta (POLQ) to DNA damage sites during mitosis. MMEJ is an alternative non-homologous end-joining (NHEJ) machinery that takes place during mitosis to repair double-strand breaks in DNA that originate in S-phase. Accumulates in M-phase; following phosphorylation by PLK1, interacts with POLQ, enabling its recruitment to double-strand breaks for subsequent repair. Also involved in the DNA damage response (DDR) signaling in response to genotoxic stresses such as ionizing radiation (IR) during the S phase. Recruited to sites of DNA damage through interaction with the 9-1-1 cell-cycle checkpoint response complex and TOPBP1 in a ATR-dependent manner. Required for the progression of the G1 to S phase transition. Plays a role in the stimulation of CHEK1 phosphorylation. The chain is RAD9, HUS1, RAD1-interacting nuclear orphan protein 1 from Homo sapiens (Human).